Reading from the N-terminus, the 166-residue chain is Phosphopantetheine adenylyltransferase (166 aa).

A substrate-binding site is contributed by S11. Residues 11-12 (SF) and H19 each bind ATP. Positions 43, 76, and 90 each coordinate substrate. ATP-binding positions include 91 to 93 (GLR), E101, and 126 to 132 (LQPISSS).

This sequence belongs to the bacterial CoaD family. As to quaternary structure, homohexamer. Mg(2+) is required as a cofactor.

Its subcellular location is the cytoplasm. It catalyses the reaction (R)-4'-phosphopantetheine + ATP + H(+) = 3'-dephospho-CoA + diphosphate. It participates in cofactor biosynthesis; coenzyme A biosynthesis; CoA from (R)-pantothenate: step 4/5. In terms of biological role, reversibly transfers an adenylyl group from ATP to 4'-phosphopantetheine, yielding dephospho-CoA (dPCoA) and pyrophosphate. This is Phosphopantetheine adenylyltransferase from Streptococcus equi subsp. zooepidemicus (strain H70).